The primary structure comprises 296 residues: Small ribosomal subunit protein uS2 (296 aa).

The segment at 245 to 296 is disordered; that stretch reads WEAPAAGFAGATGTGWDGAAGDEWGAAPATTEWAASAAPAAASGEAAKETTW. Residues 263-289 are compositionally biased toward low complexity; sequence AAGDEWGAAPATTEWAASAAPAAASGE.

The protein belongs to the universal ribosomal protein uS2 family. As to quaternary structure, component of the small ribosomal subunit. Mature ribosomes consist of a small (40S) and a large (60S) subunit. The 40S subunit contains about 33 different proteins and 1 molecule of RNA (18S). The 60S subunit contains about 49 different proteins and 3 molecules of RNA (25S, 5.8S and 5S). Interacts with RPS21.

The protein resides in the cytoplasm. Required for the assembly and/or stability of the 40S ribosomal subunit. Required for the processing of the 20S rRNA-precursor to mature 18S rRNA in a late step of the maturation of 40S ribosomal subunits. This is Small ribosomal subunit protein uS2 from Fusarium vanettenii (strain ATCC MYA-4622 / CBS 123669 / FGSC 9596 / NRRL 45880 / 77-13-4) (Fusarium solani subsp. pisi).